A 356-amino-acid polypeptide reads, in one-letter code: Alanine racemase (356 aa).

Lys35 (proton acceptor; specific for D-alanine) is an active-site residue. The residue at position 35 (Lys35) is an N6-(pyridoxal phosphate)lysine. Arg130 serves as a coordination point for substrate. Tyr253 (proton acceptor; specific for L-alanine) is an active-site residue. Met301 provides a ligand contact to substrate.

This sequence belongs to the alanine racemase family. Pyridoxal 5'-phosphate serves as cofactor.

The catalysed reaction is L-alanine = D-alanine. Its pathway is amino-acid biosynthesis; D-alanine biosynthesis; D-alanine from L-alanine: step 1/1. In terms of biological role, catalyzes the interconversion of L-alanine and D-alanine. May also act on other amino acids. The protein is Alanine racemase (alr) of Erwinia tasmaniensis (strain DSM 17950 / CFBP 7177 / CIP 109463 / NCPPB 4357 / Et1/99).